Reading from the N-terminus, the 403-residue chain is S-adenosylmethionine synthase (403 aa).

An ATP-binding site is contributed by H17. D19 is a Mg(2+) binding site. K(+) is bound at residue E45. L-methionine-binding residues include E58 and Q104. The flexible loop stretch occupies residues 104-114 (QSPDIAQGVDT). Residues 179 to 181 (DGK), 250 to 251 (KF), D259, 265 to 266 (RK), A282, and K286 each bind ATP. Residue D259 coordinates L-methionine. K290 serves as a coordination point for L-methionine.

It belongs to the AdoMet synthase family. In terms of assembly, homotetramer; dimer of dimers. It depends on Mg(2+) as a cofactor. Requires K(+) as cofactor.

It localises to the cytoplasm. It catalyses the reaction L-methionine + ATP + H2O = S-adenosyl-L-methionine + phosphate + diphosphate. It participates in amino-acid biosynthesis; S-adenosyl-L-methionine biosynthesis; S-adenosyl-L-methionine from L-methionine: step 1/1. Functionally, catalyzes the formation of S-adenosylmethionine (AdoMet) from methionine and ATP. The overall synthetic reaction is composed of two sequential steps, AdoMet formation and the subsequent tripolyphosphate hydrolysis which occurs prior to release of AdoMet from the enzyme. This is S-adenosylmethionine synthase from Mycobacterium bovis (strain ATCC BAA-935 / AF2122/97).